The chain runs to 509 residues: Ribonuclease Y (509 aa).

A helical membrane pass occupies residues 5-25; that stretch reads IAGVSGIAGAAVGAGACYLWL. Residues 199–265 form the KH domain; it reads LINLVNLPSD…TRVIEILIED (67 aa). Positions 325 to 418 constitute an HD domain; the sequence is ALAHTLEVAK…VCAADTLSAA (94 aa).

This sequence belongs to the RNase Y family.

The protein localises to the cell membrane. In terms of biological role, endoribonuclease that initiates mRNA decay. The protein is Ribonuclease Y of Sulfurovum sp. (strain NBC37-1).